The following is a 337-amino-acid chain: NADH-quinone oxidoreductase subunit H (337 aa).

9 helical membrane passes run 9–29 (GIPLAIIAAQSLALIVALLLV), 50–70 (PNVVGAFGLLQSFADLLKFVF), 82–102 (GIFLLAPLVTVVLALSGWAVI), 115–135 (VGILYIFAISSLGVYGVIMAG), 161–181 (IGFVIVCVLMTAGSLNLTAIV), 186–206 (TIWYFIPHLPMFVIFFISALA), 245–265 (SILLMCAMTTILFLGGWLPPI), 273–293 (VPGVIWFLLKVFLVFFMFAMV), and 313–333 (FLPISLFWVVLTAGVLVGFDI).

The protein belongs to the complex I subunit 1 family. As to quaternary structure, NDH-1 is composed of 14 different subunits. Subunits NuoA, H, J, K, L, M, N constitute the membrane sector of the complex.

It localises to the cell inner membrane. The catalysed reaction is a quinone + NADH + 5 H(+)(in) = a quinol + NAD(+) + 4 H(+)(out). Functionally, NDH-1 shuttles electrons from NADH, via FMN and iron-sulfur (Fe-S) centers, to quinones in the respiratory chain. The immediate electron acceptor for the enzyme in this species is believed to be ubiquinone. Couples the redox reaction to proton translocation (for every two electrons transferred, four hydrogen ions are translocated across the cytoplasmic membrane), and thus conserves the redox energy in a proton gradient. This subunit may bind ubiquinone. This is NADH-quinone oxidoreductase subunit H from Parvibaculum lavamentivorans (strain DS-1 / DSM 13023 / NCIMB 13966).